The sequence spans 93 residues: Guanine nucleotide-binding protein subunit gamma 1 (93 aa).

A coiled-coil region spans residues 12–52 (TRGRHRIQAELKKLEQEARFLEEELEELDKTDKVSAALQEL). The G protein gamma domain occupies 20-93 (AELKKLEQEA…DLRRCKCWFL (74 aa)). Cys88 is lipidated: S-palmitoyl cysteine. Cys90 is subject to Cysteine methyl ester. Cys90 carries the S-farnesyl cysteine lipid modification. A propeptide spans 91–93 (WFL) (removed in mature form).

In terms of assembly, g proteins are composed of 3 units, alpha, beta and gamma. Interacts with the beta subunit RGB1.

It is found in the cell membrane. Guanine nucleotide-binding proteins (G proteins) are involved as modulators or transducers in various transmembrane signaling systems. The sequence is that of Guanine nucleotide-binding protein subunit gamma 1 from Oryza sativa subsp. indica (Rice).